A 241-amino-acid polypeptide reads, in one-letter code: Phosphoribosylaminoimidazole-succinocarboxamide synthase (241 aa).

It belongs to the SAICAR synthetase family.

It catalyses the reaction 5-amino-1-(5-phospho-D-ribosyl)imidazole-4-carboxylate + L-aspartate + ATP = (2S)-2-[5-amino-1-(5-phospho-beta-D-ribosyl)imidazole-4-carboxamido]succinate + ADP + phosphate + 2 H(+). It functions in the pathway purine metabolism; IMP biosynthesis via de novo pathway; 5-amino-1-(5-phospho-D-ribosyl)imidazole-4-carboxamide from 5-amino-1-(5-phospho-D-ribosyl)imidazole-4-carboxylate: step 1/2. The protein is Phosphoribosylaminoimidazole-succinocarboxamide synthase (purC) of Bacillus subtilis (strain 168).